The sequence spans 297 residues: tRNA dimethylallyltransferase (297 aa).

10–17 (GITASGKS) serves as a coordination point for ATP. 12-17 (TASGKS) is a binding site for substrate. The interval 36-39 (DSKQ) is interaction with substrate tRNA.

The protein belongs to the IPP transferase family. In terms of assembly, monomer. Requires Mg(2+) as cofactor.

It carries out the reaction adenosine(37) in tRNA + dimethylallyl diphosphate = N(6)-dimethylallyladenosine(37) in tRNA + diphosphate. In terms of biological role, catalyzes the transfer of a dimethylallyl group onto the adenine at position 37 in tRNAs that read codons beginning with uridine, leading to the formation of N6-(dimethylallyl)adenosine (i(6)A). This is tRNA dimethylallyltransferase from Wolbachia pipientis wMel.